Reading from the N-terminus, the 153-residue chain is D-aminoacyl-tRNA deacylase (153 aa).

Residues 142–143 (GP) carry the Gly-cisPro motif, important for rejection of L-amino acids motif.

The protein belongs to the DTD family. Homodimer.

The protein localises to the cytoplasm. It carries out the reaction glycyl-tRNA(Ala) + H2O = tRNA(Ala) + glycine + H(+). The catalysed reaction is a D-aminoacyl-tRNA + H2O = a tRNA + a D-alpha-amino acid + H(+). In terms of biological role, an aminoacyl-tRNA editing enzyme that deacylates mischarged D-aminoacyl-tRNAs. Also deacylates mischarged glycyl-tRNA(Ala), protecting cells against glycine mischarging by AlaRS. Acts via tRNA-based rather than protein-based catalysis; rejects L-amino acids rather than detecting D-amino acids in the active site. By recycling D-aminoacyl-tRNA to D-amino acids and free tRNA molecules, this enzyme counteracts the toxicity associated with the formation of D-aminoacyl-tRNA entities in vivo and helps enforce protein L-homochirality. The chain is D-aminoacyl-tRNA deacylase from Cupriavidus necator (strain ATCC 17699 / DSM 428 / KCTC 22496 / NCIMB 10442 / H16 / Stanier 337) (Ralstonia eutropha).